Here is a 186-residue protein sequence, read N- to C-terminus: Imidazoleglycerol-phosphate dehydratase (186 aa).

This sequence belongs to the imidazoleglycerol-phosphate dehydratase family.

The protein resides in the cytoplasm. It carries out the reaction D-erythro-1-(imidazol-4-yl)glycerol 3-phosphate = 3-(imidazol-4-yl)-2-oxopropyl phosphate + H2O. It functions in the pathway amino-acid biosynthesis; L-histidine biosynthesis; L-histidine from 5-phospho-alpha-D-ribose 1-diphosphate: step 6/9. The sequence is that of Imidazoleglycerol-phosphate dehydratase from Pyrobaculum aerophilum (strain ATCC 51768 / DSM 7523 / JCM 9630 / CIP 104966 / NBRC 100827 / IM2).